A 218-amino-acid chain; its full sequence is Adenylate kinase (218 aa).

10-15 is an ATP binding site; it reads GAGKGT. Positions 30–59 are NMP; it reads STGDMIRETIKSGSVLGQELKKVLDAGELV. Residues threonine 31, arginine 36, 57 to 59, and glutamine 92 each bind AMP; that span reads ELV. The tract at residues 122–159 is LID; sequence GRRIHPASGRTYHTKFNPPKVADKDDVTGEPLITRTDD. Residues arginine 123 and 132-133 each bind ATP; that span reads TY. The AMP site is built by arginine 156 and arginine 167. Glutamine 202 serves as a coordination point for ATP.

This sequence belongs to the adenylate kinase family. In terms of assembly, monomer.

The protein localises to the cytoplasm. The catalysed reaction is AMP + ATP = 2 ADP. It participates in purine metabolism; AMP biosynthesis via salvage pathway; AMP from ADP: step 1/1. In terms of biological role, catalyzes the reversible transfer of the terminal phosphate group between ATP and AMP. Plays an important role in cellular energy homeostasis and in adenine nucleotide metabolism. This Francisella tularensis subsp. holarctica (strain LVS) protein is Adenylate kinase.